Here is a 113-residue protein sequence, read N- to C-terminus: Sperm-associated antigen 11B (113 aa).

Positions 1–26 (MIPRLLPFFASLLFAALLFPGLSNAS) are cleaved as a signal peptide. Cystine bridges form between Cys80–Cys108, Cys87–Cys101, and Cys91–Cys109.

It belongs to the beta-defensin family.

It is found in the secreted. In terms of biological role, has antimicrobial activity against E.coli. Plays a role in the defense response in the male reproductive tract, contributing to sperm maturation, storage and protection. The sequence is that of Sperm-associated antigen 11B from Mus musculus (Mouse).